The sequence spans 632 residues: MHGLLLAGLAAALPLGVAGLPARQQSGLSPRGVDINPYRFASMAKYSEHKSTSQMVHSFSYSKDDDYVATATKLVKSTFPNMTFRTVKDHYIGTNGIGHVHFKQTAHGIDIDNADFNVNIGRDGKVFTFGNSFYEGEMPKTNPLTKRDFSDPVKALQGAIKTLKLPVKPQSAKAMPMKEAETFKFEGTSGALSDPMAKLVYIQKDGKLHLTWRVETDVGDNWLLSYVDSKETETVHNVVDYVASADYKVFAWGLNDPTEGQPTMIKDPWNTTGTGSPFTWHGDGQMDYTVTRGNNIAAQDNPSGGEQWENNYRPDSPELSFVYEYSEQMEPDQYKDFAITQLFYTTNTYHDVLYALGFTEEAGNFQMNNNGKGGEGNDFAICNAQDGSGTNNANFATPPDGQNGRMRMYTWTTAQPSRDGDLEAGIVIHEYTHGLSNRLCGGPANSNCLNELEAGGMGEGWGDFYATAIRLKQGDTHDTDYTMGEWAANMKGGIREYPYSTNMQTNPYTYADVQGMDEVHGIGTVWATILYEVLWNLIDEHGMSKNIMPKFVNGAPSDGRNLAMKLVLDGMTLMPCNPNFMQARDAIIDADQALTNGQNKCALMKAFSKRGLGANYKHGKNRVNNFDMPADC.

The N-terminal stretch at 1 to 19 (MHGLLLAGLAAALPLGVAG) is a signal peptide. A propeptide spanning residues 20–244 (LPARQQSGLS…VHNVVDYVAS (225 aa)) is cleaved from the precursor. Asn270 carries an N-linked (GlcNAc...) asparagine glycan. His429 is a Zn(2+) binding site. The active site involves Glu430. His433 lines the Zn(2+) pocket.

This sequence belongs to the peptidase M36 family. The cofactor is Zn(2+).

Its subcellular location is the secreted. Functionally, secreted metalloproteinase probably acting as a virulence factor. The polypeptide is Extracellular metalloproteinase 2 (MEP2) (Trichophyton rubrum (Athlete's foot fungus)).